The sequence spans 213 residues: Large ribosomal subunit protein uL3 (213 aa).

Residues 122–147 (AIKRHGQSRGPMAHGSRYHRRPGSMG) are disordered.

Belongs to the universal ribosomal protein uL3 family. In terms of assembly, part of the 50S ribosomal subunit. Forms a cluster with proteins L14 and L19.

In terms of biological role, one of the primary rRNA binding proteins, it binds directly near the 3'-end of the 23S rRNA, where it nucleates assembly of the 50S subunit. The chain is Large ribosomal subunit protein uL3 from Geobacillus stearothermophilus (Bacillus stearothermophilus).